We begin with the raw amino-acid sequence, 555 residues long: Probable terpene synthase 6 (555 aa).

Residues D309, D313, and E460 each contribute to the Mg(2+) site. The DDXXD motif motif lies at 309-313; it reads DDTYD.

Belongs to the terpene synthase family. Requires Mg(2+) as cofactor.

Functionally, probable sesquiterpene synthase. In Ricinus communis (Castor bean), this protein is Probable terpene synthase 6 (TPS6).